A 201-amino-acid polypeptide reads, in one-letter code: MPIELLPETPSQTAGPYVHIGLALEAAGNPTRDQEIWNRLAKPDAPGEHILLLGQVYDGNGHLVRDSFLEVWQADANGEYQDAYNLENAFNSFGRTATTFDAGEWTLHTVKPGVVNNAAGVPMAPHINISLFARGINIHLHTRLYFDDEAQANAKCPVLNLIEQPQRRETLIAKRCEVDGKTAYRFDIRIQGEGETVFFDF.

Arg134 is a binding site for 3,4-dihydroxybenzoate.

This sequence belongs to the intradiol ring-cleavage dioxygenase family. The enzyme is an oligomer of 12 copies of the alpha and beta chains. Fe(3+) serves as cofactor.

It carries out the reaction 3,4-dihydroxybenzoate + O2 = 3-carboxy-cis,cis-muconate + 2 H(+). The protein operates within aromatic compound metabolism; beta-ketoadipate pathway; 3-carboxy-cis,cis-muconate from 3,4-dihydroxybenzoate: step 1/1. Its function is as follows. Plays an essential role in the utilization of numerous aromatic and hydroaromatic compounds via the beta-ketoadipate pathway. This chain is Protocatechuate 3,4-dioxygenase alpha chain (pcaG), found in Pseudomonas putida (Arthrobacter siderocapsulatus).